A 193-amino-acid polypeptide reads, in one-letter code: Acyl carrier protein phosphodiesterase (193 aa).

Belongs to the AcpH family.

It carries out the reaction holo-[ACP] + H2O = apo-[ACP] + (R)-4'-phosphopantetheine + H(+). Converts holo-ACP to apo-ACP by hydrolytic cleavage of the phosphopantetheine prosthetic group from ACP. The sequence is that of Acyl carrier protein phosphodiesterase from Salmonella dublin (strain CT_02021853).